Here is a 147-residue protein sequence, read N- to C-terminus: Phosphoribosyl-AMP cyclohydrolase (147 aa).

Asp-89 serves as a coordination point for Mg(2+). Cys-90 provides a ligand contact to Zn(2+). Positions 91 and 93 each coordinate Mg(2+). Cys-106 and Cys-113 together coordinate Zn(2+).

Belongs to the PRA-CH family. As to quaternary structure, homodimer. It depends on Mg(2+) as a cofactor. Zn(2+) serves as cofactor.

The protein resides in the cytoplasm. It catalyses the reaction 1-(5-phospho-beta-D-ribosyl)-5'-AMP + H2O = 1-(5-phospho-beta-D-ribosyl)-5-[(5-phospho-beta-D-ribosylamino)methylideneamino]imidazole-4-carboxamide. It functions in the pathway amino-acid biosynthesis; L-histidine biosynthesis; L-histidine from 5-phospho-alpha-D-ribose 1-diphosphate: step 3/9. Functionally, catalyzes the hydrolysis of the adenine ring of phosphoribosyl-AMP. The polypeptide is Phosphoribosyl-AMP cyclohydrolase (Nitrobacter hamburgensis (strain DSM 10229 / NCIMB 13809 / X14)).